Consider the following 281-residue polypeptide: Pantothenate synthetase (281 aa).

An ATP-binding site is contributed by Met17–His24. Catalysis depends on His24, which acts as the Proton donor. Position 48 (Gln48) interacts with (R)-pantoate. Position 48 (Gln48) interacts with beta-alanine. Position 134 to 137 (Gly134 to Asp137) interacts with ATP. Gln140 is a (R)-pantoate binding site. ATP-binding positions include Val163 and Leu176–Arg179.

This sequence belongs to the pantothenate synthetase family. Homodimer.

Its subcellular location is the cytoplasm. It carries out the reaction (R)-pantoate + beta-alanine + ATP = (R)-pantothenate + AMP + diphosphate + H(+). The protein operates within cofactor biosynthesis; (R)-pantothenate biosynthesis; (R)-pantothenate from (R)-pantoate and beta-alanine: step 1/1. Functionally, catalyzes the condensation of pantoate with beta-alanine in an ATP-dependent reaction via a pantoyl-adenylate intermediate. The sequence is that of Pantothenate synthetase from Deinococcus radiodurans (strain ATCC 13939 / DSM 20539 / JCM 16871 / CCUG 27074 / LMG 4051 / NBRC 15346 / NCIMB 9279 / VKM B-1422 / R1).